The primary structure comprises 338 residues: Aspartate-semialdehyde dehydrogenase (338 aa).

NADP(+)-binding positions include 13-16 (SGAV) and 41-42 (RS). Arginine 101 contacts phosphate. Catalysis depends on cysteine 132, which acts as the Acyl-thioester intermediate. Glutamine 159 lines the substrate pocket. NADP(+)-binding positions include 162–163 (SG) and proline 187. Lysine 216 serves as a coordination point for phosphate. Arginine 238 provides a ligand contact to substrate. The Proton acceptor role is filled by histidine 245. An NADP(+)-binding site is contributed by asparagine 317.

The protein belongs to the aspartate-semialdehyde dehydrogenase family. Homodimer.

It carries out the reaction L-aspartate 4-semialdehyde + phosphate + NADP(+) = 4-phospho-L-aspartate + NADPH + H(+). Its pathway is amino-acid biosynthesis; L-lysine biosynthesis via DAP pathway; (S)-tetrahydrodipicolinate from L-aspartate: step 2/4. It participates in amino-acid biosynthesis; L-methionine biosynthesis via de novo pathway; L-homoserine from L-aspartate: step 2/3. The protein operates within amino-acid biosynthesis; L-threonine biosynthesis; L-threonine from L-aspartate: step 2/5. Catalyzes the NADPH-dependent formation of L-aspartate-semialdehyde (L-ASA) by the reductive dephosphorylation of L-aspartyl-4-phosphate. In Shewanella sp. (strain DB6705), this protein is Aspartate-semialdehyde dehydrogenase.